A 213-amino-acid chain; its full sequence is 2-C-methyl-D-erythritol 4-phosphate cytidylyltransferase (213 aa).

The protein belongs to the IspD/TarI cytidylyltransferase family. IspD subfamily.

It catalyses the reaction 2-C-methyl-D-erythritol 4-phosphate + CTP + H(+) = 4-CDP-2-C-methyl-D-erythritol + diphosphate. The protein operates within isoprenoid biosynthesis; isopentenyl diphosphate biosynthesis via DXP pathway; isopentenyl diphosphate from 1-deoxy-D-xylulose 5-phosphate: step 2/6. Functionally, catalyzes the formation of 4-diphosphocytidyl-2-C-methyl-D-erythritol from CTP and 2-C-methyl-D-erythritol 4-phosphate (MEP). This chain is 2-C-methyl-D-erythritol 4-phosphate cytidylyltransferase, found in Thermus thermophilus (strain ATCC BAA-163 / DSM 7039 / HB27).